A 372-amino-acid polypeptide reads, in one-letter code: Beta sliding clamp (372 aa).

Belongs to the beta sliding clamp family. As to quaternary structure, forms a ring-shaped head-to-tail homodimer around DNA which binds and tethers DNA polymerases and other proteins to the DNA. The DNA replisome complex has a single clamp-loading complex (3 tau and 1 each of delta, delta', psi and chi subunits) which binds 3 Pol III cores (1 core on the leading strand and 2 on the lagging strand) each with a beta sliding clamp dimer. Additional proteins in the replisome are other copies of gamma, psi and chi, Ssb, DNA helicase and RNA primase.

It localises to the cytoplasm. Its function is as follows. Confers DNA tethering and processivity to DNA polymerases and other proteins. Acts as a clamp, forming a ring around DNA (a reaction catalyzed by the clamp-loading complex) which diffuses in an ATP-independent manner freely and bidirectionally along dsDNA. Initially characterized for its ability to contact the catalytic subunit of DNA polymerase III (Pol III), a complex, multichain enzyme responsible for most of the replicative synthesis in bacteria; Pol III exhibits 3'-5' exonuclease proofreading activity. The beta chain is required for initiation of replication as well as for processivity of DNA replication. This chain is Beta sliding clamp (dnaN), found in Caulobacter vibrioides (strain ATCC 19089 / CIP 103742 / CB 15) (Caulobacter crescentus).